The following is a 494-amino-acid chain: Glycerol kinase (494 aa).

T13 is an ADP binding site. ATP is bound by residues T13, T14, and S15. T13 serves as a coordination point for sn-glycerol 3-phosphate. R17 is an ADP binding site. 4 residues coordinate sn-glycerol 3-phosphate: R83, E84, Y135, and D244. Positions 83, 84, 135, 244, and 245 each coordinate glycerol. Positions 266 and 309 each coordinate ADP. T266, G309, Q313, and G410 together coordinate ATP. Residues G410 and N414 each contribute to the ADP site.

The protein belongs to the FGGY kinase family.

The catalysed reaction is glycerol + ATP = sn-glycerol 3-phosphate + ADP + H(+). The protein operates within polyol metabolism; glycerol degradation via glycerol kinase pathway; sn-glycerol 3-phosphate from glycerol: step 1/1. Inhibited by fructose 1,6-bisphosphate (FBP). Key enzyme in the regulation of glycerol uptake and metabolism. Catalyzes the phosphorylation of glycerol to yield sn-glycerol 3-phosphate. This is Glycerol kinase from Shewanella baltica (strain OS223).